Consider the following 184-residue polypeptide: Glutathione-regulated potassium-efflux system ancillary protein KefG (184 aa).

It belongs to the NAD(P)H dehydrogenase (quinone) family. KefG subfamily. In terms of assembly, interacts with KefB.

The protein localises to the cell inner membrane. It catalyses the reaction a quinone + NADH + H(+) = a quinol + NAD(+). The enzyme catalyses a quinone + NADPH + H(+) = a quinol + NADP(+). Regulatory subunit of a potassium efflux system that confers protection against electrophiles. Required for full activity of KefB. In Escherichia coli O8 (strain IAI1), this protein is Glutathione-regulated potassium-efflux system ancillary protein KefG.